A 444-amino-acid chain; its full sequence is MSANHMTPGEIVSELDKFIIGQNRAKRAVAVALRNRWRRQQVAEPLRHEIHPKNILMIGPTGVGKTEIARRLAKLANAPFIKIEATKFTEVGYVGRDVDTIIRDLTEYSIKQTRELEMRRVRSHAEDAAEDRILDALVPPPRGASGEPERGEDNSARQTFRKRLREGKIDDLEIEIEIAQPMPQMDVMTPPGMEEMAEQLRGMFAGLARDKKKSKKIKVREAFKLIVEEEAAKRVNEDDLRAAAITNVEQNGIVFLDEIDKIAARQETGGADVSRQGVQRDLLPLVEGTTVNTRYGMVRTDHILFIASGAFHLARPSDLIPELQGRFPIRVELDSLSAEDFVNILSETDASLIKQYTALLGTEDVKLEFTDDGIRRLAELAFSVNERTENIGARRLYTVMEKLLEELSFDASANSGEVITIDAAYVDLQLAETAGSQDLARYVL.

Residues I20 and 62 to 67 each bind ATP; that span reads GVGKTE. The tract at residues 130–158 is disordered; sequence EDRILDALVPPPRGASGEPERGEDNSARQ. ATP is bound by residues D257, E322, and R394.

It belongs to the ClpX chaperone family. HslU subfamily. A double ring-shaped homohexamer of HslV is capped on each side by a ring-shaped HslU homohexamer. The assembly of the HslU/HslV complex is dependent on binding of ATP.

The protein resides in the cytoplasm. In terms of biological role, ATPase subunit of a proteasome-like degradation complex; this subunit has chaperone activity. The binding of ATP and its subsequent hydrolysis by HslU are essential for unfolding of protein substrates subsequently hydrolyzed by HslV. HslU recognizes the N-terminal part of its protein substrates and unfolds these before they are guided to HslV for hydrolysis. This is ATP-dependent protease ATPase subunit HslU from Bordetella bronchiseptica (strain ATCC BAA-588 / NCTC 13252 / RB50) (Alcaligenes bronchisepticus).